A 118-amino-acid chain; its full sequence is Basic phospholipase A2 PA-11 (118 aa).

7 disulfides stabilise this stretch: C11/C71, C27/C117, C29/C45, C44/C98, C51/C91, C60/C84, and C78/C89. Ca(2+)-binding residues include Y28, G30, and G32. Residue H48 is part of the active site. Residue D49 coordinates Ca(2+). D92 is a catalytic residue.

Belongs to the phospholipase A2 family. Group I subfamily. D49 sub-subfamily. Ca(2+) serves as cofactor. As to expression, expressed by the venom gland.

It is found in the secreted. The enzyme catalyses a 1,2-diacyl-sn-glycero-3-phosphocholine + H2O = a 1-acyl-sn-glycero-3-phosphocholine + a fatty acid + H(+). PLA2 catalyzes the calcium-dependent hydrolysis of the 2-acyl groups in 3-sn-phosphoglycerides. This Pseudechis australis (Mulga snake) protein is Basic phospholipase A2 PA-11.